A 235-amino-acid polypeptide reads, in one-letter code: Small ribosomal subunit protein uS3 (235 aa).

In terms of domain architecture, KH type-2 spans valine 39–lysine 107.

The protein belongs to the universal ribosomal protein uS3 family. As to quaternary structure, part of the 30S ribosomal subunit. Forms a tight complex with proteins S10 and S14.

Its function is as follows. Binds the lower part of the 30S subunit head. Binds mRNA in the 70S ribosome, positioning it for translation. This is Small ribosomal subunit protein uS3 from Mannheimia succiniciproducens (strain KCTC 0769BP / MBEL55E).